The sequence spans 175 residues: Outer membrane protein assembly factor BamE (175 aa).

The first 21 residues, 1 to 21 (MQNTKLLLTSFTFVGLLALAG), serve as a signal peptide directing secretion. A lipid anchor (N-palmitoyl cysteine) is attached at Cys22. Residue Cys22 is the site of S-diacylglycerol cysteine attachment. Disordered regions lie at residues 117–147 (ALLG…KPGS) and 156–175 (IDNV…TSPQ).

It belongs to the BamE family. As to quaternary structure, part of the Bam complex.

The protein localises to the cell outer membrane. In terms of biological role, part of the outer membrane protein assembly complex, which is involved in assembly and insertion of beta-barrel proteins into the outer membrane. May have a structural role in maintaining the cell envelope integrity. This chain is Outer membrane protein assembly factor BamE, found in Pseudomonas fluorescens.